The primary structure comprises 292 residues: Phosphatidylserine decarboxylase proenzyme (292 aa).

Residues D89, H146, and S252 each act as charge relay system; for autoendoproteolytic cleavage activity in the active site. S252 serves as the catalytic Schiff-base intermediate with substrate; via pyruvic acid; for decarboxylase activity. S252 carries the pyruvic acid (Ser); by autocatalysis modification.

This sequence belongs to the phosphatidylserine decarboxylase family. PSD-B subfamily. Prokaryotic type I sub-subfamily. As to quaternary structure, heterodimer of a large membrane-associated beta subunit and a small pyruvoyl-containing alpha subunit. Requires pyruvate as cofactor. Post-translationally, is synthesized initially as an inactive proenzyme. Formation of the active enzyme involves a self-maturation process in which the active site pyruvoyl group is generated from an internal serine residue via an autocatalytic post-translational modification. Two non-identical subunits are generated from the proenzyme in this reaction, and the pyruvate is formed at the N-terminus of the alpha chain, which is derived from the carboxyl end of the proenzyme. The autoendoproteolytic cleavage occurs by a canonical serine protease mechanism, in which the side chain hydroxyl group of the serine supplies its oxygen atom to form the C-terminus of the beta chain, while the remainder of the serine residue undergoes an oxidative deamination to produce ammonia and the pyruvoyl prosthetic group on the alpha chain. During this reaction, the Ser that is part of the protease active site of the proenzyme becomes the pyruvoyl prosthetic group, which constitutes an essential element of the active site of the mature decarboxylase.

The protein localises to the cell membrane. The enzyme catalyses a 1,2-diacyl-sn-glycero-3-phospho-L-serine + H(+) = a 1,2-diacyl-sn-glycero-3-phosphoethanolamine + CO2. It functions in the pathway phospholipid metabolism; phosphatidylethanolamine biosynthesis; phosphatidylethanolamine from CDP-diacylglycerol: step 2/2. Catalyzes the formation of phosphatidylethanolamine (PtdEtn) from phosphatidylserine (PtdSer). The polypeptide is Phosphatidylserine decarboxylase proenzyme (Shewanella sp. (strain MR-7)).